A 95-amino-acid chain; its full sequence is MTVSNTVDQYTIMSGDRSKIKDLLCNRLTECGWRDEVRLLCRNILLEKSNSSNGVTVEQLIAEVTPKARTLVPDAVKKELLMKIRTILAENEAEN.

Belongs to the ENY2 family. Component of the nuclear pore complex (NPC)-associated AMEX complex (anchoring and mRNA export complex), composed of at least e(y)2 and xmas-2. Component of the SAGA transcription coactivator-HAT complexes, at least composed of Ada2b, e(y)2, Pcaf/Gcn5, Taf10 and Nipped-A/Trrap. Within the SAGA complex, e(y)2, Sgf11, and not/nonstop form an additional subcomplex of SAGA called the DUB module (deubiquitination module). Component of the THO complex, composed of at least e(y)2, HPR1, THO2, THOC5, THOC6 and THOC7. Interacts with e(y)1. Interacts with su(Hw) (via zinc fingers). Interacts with xmas-2; required for localization to the nuclear periphery. Interacts with the nuclear pore complex (NPC).

The protein resides in the nucleus. It is found in the nucleoplasm. The protein localises to the cytoplasm. Its function is as follows. Involved in mRNA export coupled transcription activation by association with both the AMEX and the SAGA complexes. The SAGA complex is a multiprotein complex that activates transcription by remodeling chromatin and mediating histone acetylation and deubiquitination. Within the SAGA complex, participates in a subcomplex that specifically deubiquitinates histone H2B. The SAGA complex is recruited to specific gene promoters by activators, where it is required for transcription. Required for nuclear receptor-mediated transactivation. Involved in transcription elongation by recruiting the THO complex onto nascent mRNA. The AMEX complex functions in docking export-competent ribonucleoprotein particles (mRNPs) to the nuclear entrance of the nuclear pore complex (nuclear basket). AMEX participates in mRNA export and accurate chromatin positioning in the nucleus by tethering genes to the nuclear periphery. The chain is Enhancer of yellow 2 transcription factor from Drosophila virilis (Fruit fly).